Here is a 177-residue protein sequence, read N- to C-terminus: Protein PrsK (177 aa).

The N-terminal stretch at 1 to 21 is a signal peptide; it reads MIKSTGALLLFAALSAGQAMA.

The protein resides in the fimbrium. The polypeptide is Protein PrsK (prsK) (Escherichia coli).